Reading from the N-terminus, the 185-residue chain is Dual-action ribosomal maturation protein DarP (185 aa).

Positions 1–22 are disordered; that stretch reads MWKNGAMRGCNKETGEFLGPSR.

Belongs to the DarP family.

It localises to the cytoplasm. Functionally, member of a network of 50S ribosomal subunit biogenesis factors which assembles along the 30S-50S interface, preventing incorrect 23S rRNA structures from forming. Promotes peptidyl transferase center (PTC) maturation. The sequence is that of Dual-action ribosomal maturation protein DarP from Xylella fastidiosa (strain 9a5c).